The following is a 319-amino-acid chain: Ankyrin repeat domain-containing protein 1 (319 aa).

Residues 55–89 (LGEEQRKSEKVREAELKKKKLEQRSKLENLEDLEI) are a coiled coil. ANK repeat units follow at residues 152 to 181 (YKRT…QIEF), 185 to 214 (LEST…KISA), 218 to 247 (LLST…DLNA), 251 to 280 (EGDT…DLNV), and 284 to 315 (AGKT…KNSR).

As to quaternary structure, interacts with TTN/titin. Interacts with YBX1. Expressed in heart, cardiac muscle.

Its subcellular location is the nucleus. In terms of biological role, may play an important role in endothelial cell activation. May act as a nuclear transcription factor that negatively regulates the expression of cardiac genes. The sequence is that of Ankyrin repeat domain-containing protein 1 (Ankrd1) from Rattus norvegicus (Rat).